A 248-amino-acid chain; its full sequence is Secreted and transmembrane protein 1 (248 aa).

The N-terminal stretch at 1 to 28 (MQTCPLAFPGHVSQALGTLLFLAASLSA) is a signal peptide. Over 29–145 (QNEGWDSPIC…AEPQSAPDTG (117 aa)) the chain is Extracellular. A disulfide bridge links cysteine 38 with cysteine 55. Asparagine 56 is a glycosylation site (N-linked (GlcNAc...) asparagine). A helical membrane pass occupies residues 146–166 (FWPVPAVVTAVFILLVALVMF). The Cytoplasmic portion of the chain corresponds to 167–248 (AWYRCRCSQQ…QPLFPYAADP (82 aa)).

It belongs to the SECTM family. As to quaternary structure, interacts with CD7. As to expression, detected at the highest levels in peripheral blood leukocytes and breast cancer cell lines. Found in leukocytes of the myeloid lineage, with the strongest expression observed in granulocytes and no detectable expression in lymphocytes. Expressed in thymic epithelial cells and fibroblasts.

Its subcellular location is the cell membrane. It is found in the secreted. May be involved in thymocyte signaling. The protein is Secreted and transmembrane protein 1 (SECTM1) of Homo sapiens (Human).